Here is a 470-residue protein sequence, read N- to C-terminus: Siroheme synthase (470 aa).

The interval 1–201 (MDYFPIFCQL…NDHVQADQHV (201 aa)) is precorrin-2 dehydrogenase /sirohydrochlorin ferrochelatase. NAD(+) is bound by residues 22–23 (EI) and 43–44 (CE). Ser128 is subject to Phosphoserine. Residues 213 to 470 (GEVVLVGAGP…KVTECVAHVG (258 aa)) are uroporphyrinogen-III C-methyltransferase. Pro222 is a binding site for S-adenosyl-L-methionine. Asp245 acts as the Proton acceptor in catalysis. Lys267 functions as the Proton donor in the catalytic mechanism. S-adenosyl-L-methionine-binding positions include 298–300 (GGD), Ile303, 328–329 (TA), Met379, and Gly408.

This sequence in the N-terminal section; belongs to the precorrin-2 dehydrogenase / sirohydrochlorin ferrochelatase family. In the C-terminal section; belongs to the precorrin methyltransferase family.

The catalysed reaction is uroporphyrinogen III + 2 S-adenosyl-L-methionine = precorrin-2 + 2 S-adenosyl-L-homocysteine + H(+). It catalyses the reaction precorrin-2 + NAD(+) = sirohydrochlorin + NADH + 2 H(+). It carries out the reaction siroheme + 2 H(+) = sirohydrochlorin + Fe(2+). Its pathway is cofactor biosynthesis; adenosylcobalamin biosynthesis; precorrin-2 from uroporphyrinogen III: step 1/1. The protein operates within cofactor biosynthesis; adenosylcobalamin biosynthesis; sirohydrochlorin from precorrin-2: step 1/1. It participates in porphyrin-containing compound metabolism; siroheme biosynthesis; precorrin-2 from uroporphyrinogen III: step 1/1. It functions in the pathway porphyrin-containing compound metabolism; siroheme biosynthesis; siroheme from sirohydrochlorin: step 1/1. Its pathway is porphyrin-containing compound metabolism; siroheme biosynthesis; sirohydrochlorin from precorrin-2: step 1/1. Its function is as follows. Multifunctional enzyme that catalyzes the SAM-dependent methylations of uroporphyrinogen III at position C-2 and C-7 to form precorrin-2 via precorrin-1. Then it catalyzes the NAD-dependent ring dehydrogenation of precorrin-2 to yield sirohydrochlorin. Finally, it catalyzes the ferrochelation of sirohydrochlorin to yield siroheme. The polypeptide is Siroheme synthase (Yersinia pestis).